The sequence spans 3848 residues: Intermembrane lipid transfer protein tipC (3848 aa).

The 109-residue stretch at 4-112 folds into the Chorein N-terminal domain; the sequence is HIAASVLTKY…KFQDEKQAKL (109 aa). 12 disordered regions span residues 243-268, 450-481, 966-985, 1174-1219, 1326-1345, 1907-1926, 2024-2047, 2209-2290, 2330-2353, 2509-2541, 3209-3228, and 3310-3342; these read IKKE…DEIE, LKLQ…TGGG, QQLQ…SPPL, KNNQ…NNNS, ERKL…GVST, ENIN…TTTT, DDYN…NQLP, IKPA…NKNL, FNPK…SPLL, KQLN…NLLG, GITN…NNND, and INQQ…NTTQ. Composition is skewed to low complexity over residues 251 to 260 and 452 to 477; these read QQQQQQQQQG and LQQQ…PSTS. Over residues 1175–1190 the composition is skewed to low complexity; sequence NNQNNNQNNNQNNNQN. A compositionally biased stretch (polar residues) spans 1191–1200; sequence INESSPTVFI. Residues 1202–1211 show a composition bias toward pro residues; it reads SPPPPPPPPL. Residues 1333 to 1345 show a composition bias toward low complexity; sequence TSPTTPSSSGVST. Composition is skewed to low complexity over residues 2029 to 2044, 2217 to 2289, and 2335 to 2353; these read DNYN…NSNN, NNNN…NNKN, and SSSS…SPLL. 2 stretches are compositionally biased toward low complexity: residues 3212 to 3228 and 3311 to 3342; these read NDPN…NNND and NQQP…NTTQ.

This sequence belongs to the VPS13 family.

It is found in the membrane. Mediates the transfer of lipids between membranes at organelle contact sites. The sequence is that of Intermembrane lipid transfer protein tipC (tipC) from Dictyostelium discoideum (Social amoeba).